Here is a 520-residue protein sequence, read N- to C-terminus: Amine oxidase [flavin-containing] B (520 aa).

S2 carries the post-translational modification N-acetylserine. At 2-489 (SSKCDVVVVG…TFLERHLPSV (488 aa)) the chain is on the cytoplasmic side. The residue at position 52 (K52) is an N6-acetyllysine. S-8alpha-FAD cysteine is present on C397. Residues 490 to 516 (PGLLRLIGLTAIFSATALGYLAHKRGL) traverse the membrane as a helical; Anchor for type IV membrane protein segment. Residues 517–520 (LVRV) are Mitochondrial intermembrane-facing.

This sequence belongs to the flavin monoamine oxidase family. In terms of assembly, monomer, homo- or heterodimer (containing two subunits of similar size). Each subunit contains a covalently bound flavin. Enzymatically active as monomer. FAD serves as cofactor.

It localises to the mitochondrion outer membrane. It catalyses the reaction a secondary aliphatic amine + O2 + H2O = a primary amine + an aldehyde + H2O2. The catalysed reaction is (R)-adrenaline + O2 + H2O = (R)-3,4-dihydroxymandelaldehyde + methylamine + H2O2. The enzyme catalyses a primary methyl amine + O2 + H2O = an aldehyde + H2O2 + NH4(+). It carries out the reaction benzylamine + O2 + H2O = benzaldehyde + H2O2 + NH4(+). It catalyses the reaction dopamine + O2 + H2O = 3,4-dihydroxyphenylacetaldehyde + H2O2 + NH4(+). The catalysed reaction is tyramine + O2 + H2O = (4-hydroxyphenyl)acetaldehyde + H2O2 + NH4(+). The enzyme catalyses (R)-noradrenaline + O2 + H2O = (R)-3,4-dihydroxymandelaldehyde + H2O2 + NH4(+). It carries out the reaction 2-phenylethylamine + O2 + H2O = 2-phenylacetaldehyde + H2O2 + NH4(+). It catalyses the reaction N-acetylputrescine + O2 + H2O = 4-acetamidobutanal + H2O2 + NH4(+). Its function is as follows. Catalyzes the oxidative deamination of primary and some secondary amines such as neurotransmitters, and exogenous amines including the tertiary amine, neurotoxin 1-methyl-4-phenyl-1,2,3,6-tetrahydropyridine (MPTP), with concomitant reduction of oxygen to hydrogen peroxide and participates in the metabolism of neuroactive and vasoactive amines in the central nervous system and peripheral tissues. Preferentially degrades benzylamine and phenylethylamine. This chain is Amine oxidase [flavin-containing] B, found in Sus scrofa (Pig).